The following is a 177-amino-acid chain: Austinoid biosynthesis clusters protein F (177 aa).

The protein belongs to the trt14 isomerase family. Homodimer.

It participates in secondary metabolite biosynthesis; terpenoid biosynthesis. Its function is as follows. Part of the gene cluster B that mediates the biosynthesis of austinol and dehydroaustinol, two fungal meroterpenoids. The first step of the pathway is the synthesis of 3,5-dimethylorsellinic acid by the polyketide synthase ausA. 3,5-dimethylorsellinic acid is then prenylated by the polyprenyl transferase ausN. Further epoxidation by the FAD-dependent monooxygenase ausM and cyclization by the probable terpene cyclase ausL lead to the formation of protoaustinoid A. Protoaustinoid A is then oxidized to spiro-lactone preaustinoid A3 by the combined action of the FAD-binding monooxygenases ausB and ausC, and the dioxygenase ausE. Acid-catalyzed keto-rearrangement and ring contraction of the tetraketide portion of preaustinoid A3 by ausJ lead to the formation of preaustinoid A4. The aldo-keto reductase ausK, with the help of ausH, is involved in the next step by transforming preaustinoid A4 into isoaustinone which is in turn hydroxylated by the P450 monooxygenase ausI to form austinolide. Finally, the cytochrome P450 monooxygenase ausG modifies austinolide to austinol. Austinol can be further modified to dehydroaustinol which forms a diffusible complex with diorcinol that initiates conidiation. Due to genetic rearrangements of the clusters and the subsequent loss of some enzymes, the end products of the Emericella nidulans austinoid biosynthesis clusters are austinol and dehydroaustinol, even if additional enzymes, such as the O-acetyltransferase ausQ and the cytochrome P450 monooxygenase ausR are still functional. In Emericella nidulans (strain FGSC A4 / ATCC 38163 / CBS 112.46 / NRRL 194 / M139) (Aspergillus nidulans), this protein is Austinoid biosynthesis clusters protein F.